The primary structure comprises 260 residues: Cytosolic Fe-S cluster assembly factor Nubp2 homolog (260 aa).

An ATP-binding site is contributed by G14–S21. 2 residues coordinate [4Fe-4S] cluster: C188 and C191.

The protein belongs to the Mrp/NBP35 ATP-binding proteins family. NUBP2/CFD1 subfamily. In terms of assembly, heterotetramer of 2 Nubp1 and 2 Nubp2 chains. [4Fe-4S] cluster serves as cofactor.

The protein localises to the cytoplasm. Its function is as follows. Component of the cytosolic iron-sulfur (Fe/S) protein assembly (CIA) machinery. Required for maturation of extramitochondrial Fe-S proteins. The Nubp1-Nubp2 heterotetramer forms a Fe-S scaffold complex, mediating the de novo assembly of an Fe-S cluster and its transfer to target apoproteins. The polypeptide is Cytosolic Fe-S cluster assembly factor Nubp2 homolog (Drosophila erecta (Fruit fly)).